The chain runs to 508 residues: 3-octaprenyl-4-hydroxybenzoate carboxy-lyase (508 aa).

Residue Asn-178 coordinates Mn(2+). Prenylated FMN contacts are provided by residues 181–183, 195–197, and 200–201; these read IYR, RWL, and RG. A Mn(2+)-binding site is contributed by Glu-244. Residue Asp-303 is the Proton donor of the active site.

Belongs to the UbiD family. As to quaternary structure, homohexamer. The cofactor is prenylated FMN. Mn(2+) is required as a cofactor.

Its subcellular location is the cell membrane. The enzyme catalyses a 4-hydroxy-3-(all-trans-polyprenyl)benzoate + H(+) = a 2-(all-trans-polyprenyl)phenol + CO2. It functions in the pathway cofactor biosynthesis; ubiquinone biosynthesis. Catalyzes the decarboxylation of 3-octaprenyl-4-hydroxy benzoate to 2-octaprenylphenol, an intermediate step in ubiquinone biosynthesis. The chain is 3-octaprenyl-4-hydroxybenzoate carboxy-lyase from Cupriavidus taiwanensis (strain DSM 17343 / BCRC 17206 / CCUG 44338 / CIP 107171 / LMG 19424 / R1) (Ralstonia taiwanensis (strain LMG 19424)).